A 531-amino-acid chain; its full sequence is Anthranilate synthase component 1 (531 aa).

Residues Ser-56 and 284-286 each bind L-tryptophan; that span reads PYM. Residue 324-325 coordinates chorismate; sequence GS. Glu-351 is a Mg(2+) binding site. Chorismate-binding positions include Tyr-439, Arg-459, 473 to 475, and Gly-475; that span reads GGG. Residue Glu-488 coordinates Mg(2+). The disordered stretch occupies residues 506 to 531; it reads LHNITPDSVSAPDSVSSPDSVTEANS. Over residues 511–531 the composition is skewed to low complexity; sequence PDSVSAPDSVSSPDSVTEANS.

This sequence belongs to the anthranilate synthase component I family. In terms of assembly, heterotetramer consisting of two non-identical subunits: a beta subunit (TrpG) and a large alpha subunit (TrpE). It depends on Mg(2+) as a cofactor.

It catalyses the reaction chorismate + L-glutamine = anthranilate + pyruvate + L-glutamate + H(+). The protein operates within amino-acid biosynthesis; L-tryptophan biosynthesis; L-tryptophan from chorismate: step 1/5. Feedback inhibited by tryptophan. Functionally, part of a heterotetrameric complex that catalyzes the two-step biosynthesis of anthranilate, an intermediate in the biosynthesis of L-tryptophan. In the first step, the glutamine-binding beta subunit (TrpG) of anthranilate synthase (AS) provides the glutamine amidotransferase activity which generates ammonia as a substrate that, along with chorismate, is used in the second step, catalyzed by the large alpha subunit of AS (TrpE) to produce anthranilate. In the absence of TrpG, TrpE can synthesize anthranilate directly from chorismate and high concentrations of ammonia. This chain is Anthranilate synthase component 1 (trpE), found in Arthrobacter globiformis.